Reading from the N-terminus, the 206-residue chain is Large ribosomal subunit protein bL25 (206 aa).

It belongs to the bacterial ribosomal protein bL25 family. CTC subfamily. As to quaternary structure, part of the 50S ribosomal subunit; part of the 5S rRNA/L5/L18/L25 subcomplex. Contacts the 5S rRNA. Binds to the 5S rRNA independently of L5 and L18.

Functionally, this is one of the proteins that binds to the 5S RNA in the ribosome where it forms part of the central protuberance. The chain is Large ribosomal subunit protein bL25 from Bartonella henselae (strain ATCC 49882 / DSM 28221 / CCUG 30454 / Houston 1) (Rochalimaea henselae).